Consider the following 294-residue polypeptide: 4-diphosphocytidyl-2-C-methyl-D-erythritol kinase (294 aa).

Residue K16 is part of the active site. An ATP-binding site is contributed by 99-109 (PMGAGLGGGSS). Residue D141 is part of the active site.

Belongs to the GHMP kinase family. IspE subfamily.

It catalyses the reaction 4-CDP-2-C-methyl-D-erythritol + ATP = 4-CDP-2-C-methyl-D-erythritol 2-phosphate + ADP + H(+). The protein operates within isoprenoid biosynthesis; isopentenyl diphosphate biosynthesis via DXP pathway; isopentenyl diphosphate from 1-deoxy-D-xylulose 5-phosphate: step 3/6. In terms of biological role, catalyzes the phosphorylation of the position 2 hydroxy group of 4-diphosphocytidyl-2C-methyl-D-erythritol. This chain is 4-diphosphocytidyl-2-C-methyl-D-erythritol kinase, found in Polynucleobacter asymbioticus (strain DSM 18221 / CIP 109841 / QLW-P1DMWA-1) (Polynucleobacter necessarius subsp. asymbioticus).